The chain runs to 272 residues: Phosphate import ATP-binding protein PstB 1 (272 aa).

Positions 26–267 constitute an ABC transporter domain; sequence ISIENLNLFY…PMKKQTEDYI (242 aa). An ATP-binding site is contributed by 58–65; it reads GPSGCGKS.

Belongs to the ABC transporter superfamily. Phosphate importer (TC 3.A.1.7) family. In terms of assembly, the complex is composed of two ATP-binding proteins (PstB), two transmembrane proteins (PstC and PstA) and a solute-binding protein (PstS).

It is found in the cell inner membrane. It catalyses the reaction phosphate(out) + ATP + H2O = ADP + 2 phosphate(in) + H(+). In terms of biological role, part of the ABC transporter complex PstSACB involved in phosphate import. Responsible for energy coupling to the transport system. The protein is Phosphate import ATP-binding protein PstB 1 of Vibrio parahaemolyticus serotype O3:K6 (strain RIMD 2210633).